Consider the following 294-residue polypeptide: MSSDTKYKYAVVRIPETSVVDFFSLIVAKGYSDVSFVASLSQCNLRDDPNDDQPTTSSNSVKESINDDESNSENNKLSPPRRQSNPHSSLPAISSSTVKNEPTDSWTPSALSNDPTPDLLSATVPAELLTNLFAKTKSTEPKPQQLFGFQASGVDFDLSNNEWHENLRLPNGNGTEKYHPYGGNSKNDSPLQTRMKGWQREYIKEVIKDSHYPTEEELRDIEQKCDLSRKQILRFIAKRLTNPNRKPRVNHHDEKRKEQEERDSLADPDDDMINDNEAVTNLHHILNSLQETTA.

Disordered regions lie at residues 43–119 and 167–191; these read CNLR…TPDL and LRLP…DSPL. Composition is skewed to polar residues over residues 52 to 63 and 81 to 115; these read DQPTTSSNSVKE and RRQS…SNDP. The homeobox; atypical DNA-binding region spans 192 to 232; that stretch reads QTRMKGWQREYIKEVIKDSHYPTEEELRDIEQKCDLSRKQI. The disordered stretch occupies residues 238-274; the sequence is KRLTNPNRKPRVNHHDEKRKEQEERDSLADPDDDMIN. The span at 250 to 265 shows a compositional bias: basic and acidic residues; that stretch reads NHHDEKRKEQEERDSL.

As to expression, expressed widely, including gut, the amphid sheath glial cells, and head and tail neurons including AWC, ASE, and ASH. Expressed in AWC (ON) olfactory neuron but not AWC (OFF).

The protein resides in the nucleus. Functionally, transcriptional regulator which binds DNA consensus sequence 5'-CCTTAAC-3'. Plays a role in establishing and maintaining asymmetric cell fates in chemosensory AWC neurons during larval neuronal development. This is achieved by repressing the expression of multiple AWC (OFF) genes, including srsx-3 and hlh-11 in the AWC (ON) neuron. Activates expression of sox-2 in the AWC (ON) neuron. The polypeptide is Transcription factor nsy-7 (Caenorhabditis elegans).